A 429-amino-acid chain; its full sequence is Enolase (429 aa).

Q163 is a (2R)-2-phosphoglycerate binding site. Catalysis depends on E205, which acts as the Proton donor. 3 residues coordinate Mg(2+): D242, E285, and D312. The (2R)-2-phosphoglycerate site is built by K337, R366, S367, and K388. K337 acts as the Proton acceptor in catalysis.

Belongs to the enolase family. Requires Mg(2+) as cofactor.

Its subcellular location is the cytoplasm. It is found in the secreted. The protein localises to the cell surface. The catalysed reaction is (2R)-2-phosphoglycerate = phosphoenolpyruvate + H2O. It functions in the pathway carbohydrate degradation; glycolysis; pyruvate from D-glyceraldehyde 3-phosphate: step 4/5. Its function is as follows. Catalyzes the reversible conversion of 2-phosphoglycerate (2-PG) into phosphoenolpyruvate (PEP). It is essential for the degradation of carbohydrates via glycolysis. The sequence is that of Enolase from Azoarcus sp. (strain BH72).